The sequence spans 478 residues: Glutamate--tRNA ligase (478 aa).

The 'HIGH' region motif lies at 8–18 (PSPTGYLHLGN). A 'KMSKS' region motif is present at residues 248–252 (KLSKR). Residue K251 coordinates ATP.

The protein belongs to the class-I aminoacyl-tRNA synthetase family. Glutamate--tRNA ligase type 1 subfamily. As to quaternary structure, monomer.

It localises to the cytoplasm. The catalysed reaction is tRNA(Glu) + L-glutamate + ATP = L-glutamyl-tRNA(Glu) + AMP + diphosphate. Its function is as follows. Catalyzes the attachment of glutamate to tRNA(Glu) in a two-step reaction: glutamate is first activated by ATP to form Glu-AMP and then transferred to the acceptor end of tRNA(Glu). This is Glutamate--tRNA ligase from Sulfurihydrogenibium sp. (strain YO3AOP1).